Reading from the N-terminus, the 179-residue chain is Large ribosomal subunit protein uL6 (179 aa).

The protein belongs to the universal ribosomal protein uL6 family. In terms of assembly, part of the 50S ribosomal subunit.

In terms of biological role, this protein binds to the 23S rRNA, and is important in its secondary structure. It is located near the subunit interface in the base of the L7/L12 stalk, and near the tRNA binding site of the peptidyltransferase center. The polypeptide is Large ribosomal subunit protein uL6 (Finegoldia magna (strain ATCC 29328 / DSM 20472 / WAL 2508) (Peptostreptococcus magnus)).